Reading from the N-terminus, the 231-residue chain is ADP-ribosylation factor-like protein 6-interacting protein 4 (231 aa).

Basic residues predominate over residues 1–19; the sequence is MAHVSSRKRSRSRSRSRGR. A disordered region spans residues 1–154; that stretch reads MAHVSSRKRS…EDNDGPVLTD (154 aa). The segment covering 20–34 has biased composition (basic and acidic residues); it reads RGSEKRSKRSSKDSS. A compositionally biased stretch (low complexity) spans 64 to 89; that stretch reads TSRSSSSSSSSSSSSSSSSTSSSSSS. The segment covering 92–119 has biased composition (basic residues); that stretch reads RKKRGKHKDKKKRKKKKKRKKKMKRKGK. Phosphoserine is present on residues Ser142 and Ser176. A Glycyl lysine isopeptide (Lys-Gly) (interchain with G-Cter in SUMO2) cross-link involves residue Lys193.

Belongs to the ARL6IP4 family. As to quaternary structure, interacts with ARL6. Interacts with ZCCHC17. Interacts with SRSF2.

The protein resides in the nucleus. It localises to the nucleolus. Its subcellular location is the nucleus speckle. Functionally, involved in modulating alternative pre-mRNA splicing with either 5' distal site activation or preferential use of 3' proximal site. This chain is ADP-ribosylation factor-like protein 6-interacting protein 4 (Arl6ip4), found in Rattus norvegicus (Rat).